Reading from the N-terminus, the 427-residue chain is UPF0229 protein YeaH (427 aa).

Positions 79-90 (NDHFIQNDRIER) are enriched in basic and acidic residues. Residues 79 to 110 (NDHFIQNDRIERPQGGGGGSGSGQGQASQDGE) form a disordered region. The segment covering 92–102 (QGGGGGSGSGQ) has biased composition (gly residues).

Belongs to the UPF0229 family.

The chain is UPF0229 protein YeaH from Salmonella paratyphi B (strain ATCC BAA-1250 / SPB7).